The chain runs to 94 residues: Fungal defensin scedosporisin-2 (94 aa).

Residues 1–25 (MKFSNISIAALFTILASTAMAAPAA) form the signal peptide. A propeptide spanning residues 26 to 56 (DSPDSIVAREPAPVEETYEAPSGLEKRGFGC) is cleaved from the precursor. Positions 54, 55, and 56 each coordinate beta-D-GlcNAc-(1-&gt;4)-Mur2Ac(oyl-L-Ala-gamma-D-Glu-L-Lys-D-Ala-D-Ala)-di-trans,octa-cis-undecaprenyl diphosphate. Cystine bridges form between Cys-56–Cys-78, Cys-63–Cys-91, and Cys-67–Cys-93. The interaction site with membrane interface stretch occupies residues 57–60 (PGSE). His-66 contributes to the beta-D-GlcNAc-(1-&gt;4)-Mur2Ac(oyl-L-Ala-gamma-D-Glu-L-Lys-D-Ala-D-Ala)-di-trans,octa-cis-undecaprenyl diphosphate binding site. Residues 83–90 (IPFVGRPR) form an interaction site with membrane interface region. Cys-91 is a beta-D-GlcNAc-(1-&gt;4)-Mur2Ac(oyl-L-Ala-gamma-D-Glu-L-Lys-D-Ala-D-Ala)-di-trans,octa-cis-undecaprenyl diphosphate binding site.

Belongs to the invertebrate defensin family.

The protein resides in the secreted. It localises to the target cell membrane. Its function is as follows. Antibacterial peptide potently active against Gram-positive bacteria. May act by selectively inhibiting peptidoglycan biosynthesis through complex formation with the cell wall precursor lipid II (1:1 molar ratio) thus inhibiting cell wall synthesis. Shows remarkably activity against resistant isolates such as methicillin-resistant Staphylococcus aureus (MRSA) and vancomycin-resistant Enterococci (VRE) at the concentration of micromolar level. Does not act by destroying the membrane integrity, which is consistent with its nonamphiphilic architecture. Acts more rapidly than vancomycin. Shows low hemolysis and cytotoxicity and high serum stability. In vivo, is as efficient as vancomycin to protect mouse peritonitis models from MRSA infections. The protein is Fungal defensin scedosporisin-2 of Pseudallescheria apiosperma (Scedosporium apiospermum).